The chain runs to 321 residues: o-succinylbenzoate synthase (321 aa).

The active-site Proton donor is lysine 134. Positions 162, 191, and 214 each coordinate Mg(2+). The active-site Proton acceptor is lysine 236.

It belongs to the mandelate racemase/muconate lactonizing enzyme family. MenC type 1 subfamily. It depends on a divalent metal cation as a cofactor.

The enzyme catalyses (1R,6R)-6-hydroxy-2-succinyl-cyclohexa-2,4-diene-1-carboxylate = 2-succinylbenzoate + H2O. It participates in quinol/quinone metabolism; 1,4-dihydroxy-2-naphthoate biosynthesis; 1,4-dihydroxy-2-naphthoate from chorismate: step 4/7. The protein operates within quinol/quinone metabolism; menaquinone biosynthesis. Its function is as follows. Converts 2-succinyl-6-hydroxy-2,4-cyclohexadiene-1-carboxylate (SHCHC) to 2-succinylbenzoate (OSB). In Enterobacter sp. (strain 638), this protein is o-succinylbenzoate synthase.